The primary structure comprises 250 residues: Probable transcriptional regulatory protein SYNAS_07390 (250 aa).

Belongs to the TACO1 family.

It is found in the cytoplasm. The sequence is that of Probable transcriptional regulatory protein SYNAS_07390 from Syntrophus aciditrophicus (strain SB).